Here is a 598-residue protein sequence, read N- to C-terminus: Arginine--tRNA ligase (598 aa).

Positions 131-141 (ANPTGPMHVGH) match the 'HIGH' region motif. The segment at 288-308 (KLPPPKSKKGQPPAQPQPDEE) is disordered.

This sequence belongs to the class-I aminoacyl-tRNA synthetase family. Monomer.

It localises to the cytoplasm. It catalyses the reaction tRNA(Arg) + L-arginine + ATP = L-arginyl-tRNA(Arg) + AMP + diphosphate. This chain is Arginine--tRNA ligase, found in Anaeromyxobacter sp. (strain K).